We begin with the raw amino-acid sequence, 334 residues long: MLYSLARPMLFSLAPERAHELTLSMLDKAHKLGMMRQTVEAKPTTCMGIEFPNPVGLAAGLDKNGAHIDALAGLGFGFIEIGTITPRPQSGNPKPRLFRIPEAKAIINRMGFNNDGVDKLIENVKASKFRGILGINIGKNADTPVEKAVDDYLICLEKVYNYASYITVNISSPNTKNLRSLQSGDALTELLQTLKARQLELAEQYNHYVPLVLKVAPDLTAEDVEFISAQLLDFKIDGLIVTNTTLSREGVENLPYGNESGGLSGAPVFEKSTECLRLFAQTLKGQIPLIGVGGILSGEQAAAKQQAGATLVQIYSGLIYTGPTLVKQCVEAMT.

Residues 59 to 63 (AGLDK) and Thr-83 each bind FMN. Position 63 (Lys-63) interacts with substrate. 108–112 (NRMGF) provides a ligand contact to substrate. 2 residues coordinate FMN: Asn-136 and Asn-169. A substrate-binding site is contributed by Asn-169. Ser-172 (nucleophile) is an active-site residue. Asn-174 provides a ligand contact to substrate. Lys-214 and Thr-242 together coordinate FMN. 243-244 (NT) is a binding site for substrate. FMN is bound by residues Gly-265, Gly-294, and 315–316 (YS).

Belongs to the dihydroorotate dehydrogenase family. Type 2 subfamily. In terms of assembly, monomer. FMN is required as a cofactor.

Its subcellular location is the cell membrane. The enzyme catalyses (S)-dihydroorotate + a quinone = orotate + a quinol. The protein operates within pyrimidine metabolism; UMP biosynthesis via de novo pathway; orotate from (S)-dihydroorotate (quinone route): step 1/1. In terms of biological role, catalyzes the conversion of dihydroorotate to orotate with quinone as electron acceptor. The polypeptide is Dihydroorotate dehydrogenase (quinone) (Acinetobacter baumannii (strain AB0057)).